Reading from the N-terminus, the 500-residue chain is L-arabinose isomerase (500 aa).

Residues E306, E331, H348, and H447 each contribute to the Mn(2+) site.

It belongs to the arabinose isomerase family. The cofactor is Mn(2+).

The catalysed reaction is beta-L-arabinopyranose = L-ribulose. The protein operates within carbohydrate degradation; L-arabinose degradation via L-ribulose; D-xylulose 5-phosphate from L-arabinose (bacterial route): step 1/3. Functionally, catalyzes the conversion of L-arabinose to L-ribulose. The sequence is that of L-arabinose isomerase from Anoxybacillus flavithermus (strain DSM 21510 / WK1).